The following is a 1387-amino-acid chain: MNELMKILGQGGQSLSFDQIKIQMASPEQIRSWSYGEIKKPETINYRTFKPERDGLFCARIFGPIKDYECLCGKYKRMKFRGIVCEKCGVEVTLAKVRRERMGHIELASPVAHIWFLKSLPSRIGLMVDLTLKELEKILYFENYVVLEPGLTDLKLHQLLTEEQLLNKQDEFGDDAFRAGIGAEAIKSVLEGIDIDEDKVRLRAELKETTSETKRKKLVKRLKLIEAFAESGAKPEWMILDVVPVIPPELRPLVPLDGGRFATSDLNDLYRRVINRNNRLKRLIELRAPDIIVRNEKRMLQESVDALFDNGRRGRAITGANKRPLKSLSDMLKGKQGRFRQNLLGKRVDYSGRSVIVVGPEMKLHQCGLPKKMALELFKPFIYSKLEKYGHATTIKAAKRMVEKERPEVWDILEEVIREHPVMLNRAPTLHRLGIQAFEPVLIEGKAIQLHPLVTTAFNADFDGDQMAVHVPLSLEAQLEARVLMMSTNNILSPANGKPIIVPSQDIVLGLYYLSLETPEFRNTPDDKAQAFGTLGEIEAALHARTVTLHTKIRARLHTVDDQGSPIRVRVVTTPGRMLIAQILPRHPNVPFALINKQLTKKNVSDVIDAVYRHCGQKECVIFADRLMGLGFGQAAKAGISFGKDDLIIPAEKQEMIEKTAGEVKEFEQQYQDGLITAGERYNKVVDAWSRCTDEVAGAMMKEISKQELGRPINSVWMMSHSGARGSPAQMRQLAGMRGLMAKPSGEIIEQPIIANFKEGLSVLEYFNSTHGARKGLADTALKTANSGYLTRRLVDVAQDCIIVENDCGTERGLTVRAVMDGGEVVSSLSERILGRTLSEDVLDPTTNKILYPRNTLIEEEHAEKIEKAGIEVVKIRSVLTCESTVGVCGHCYGRDLARGTPVNIGEAVGVIAAQSIGEPGTQLTMRTFHIGGAAQRGAEQSSVEASHDGIVTVKNRNVVLNSQNVAIVMSRNCEIVLADEKGRERARYRVPYGARLLTDEGAQVTRAQKLAEWDPYTLPIITERAGKVEYLDLLDGVTLVERMDEVTGLTSKVVVDYKQNARGVDLRPRLQLKDESGDVVRLSNNTDARYFLSPDSILSVENGAEVNAGDVLARIPREGSKTRDITGGLPRVAELFEARRPKDHAVIAETDGRVEFGKDYKAKRRIIVKNDETGEETEYLIPKGKHVSVQEGDFVRLGDPLVDGPRVPHDILKVLGVEALSDYLVNEIQDVYRLQGVKINDKHIEVIVRQMLQKVEILDPGDTMYLIGEQVDRLEFEAENRKREREGERPAVAMPVLQGITKASLQTQSFISAASFQETTRVLTEAATAGKVDTLNGLKENVIVGRLIPAGTGSVMNRLRRIASGQDEAKGVGQETPRLSGQEAAE.

The Zn(2+) site is built by C70, C72, C85, and C88. Mg(2+) contacts are provided by D461, D463, and D465. The Zn(2+) site is built by C808, C882, C889, and C892. Positions 1367–1387 (QDEAKGVGQETPRLSGQEAAE) are disordered.

The protein belongs to the RNA polymerase beta' chain family. As to quaternary structure, the RNAP catalytic core consists of 2 alpha, 1 beta, 1 beta' and 1 omega subunit. When a sigma factor is associated with the core the holoenzyme is formed, which can initiate transcription. Requires Mg(2+) as cofactor. Zn(2+) serves as cofactor.

The catalysed reaction is RNA(n) + a ribonucleoside 5'-triphosphate = RNA(n+1) + diphosphate. Functionally, DNA-dependent RNA polymerase catalyzes the transcription of DNA into RNA using the four ribonucleoside triphosphates as substrates. The protein is DNA-directed RNA polymerase subunit beta' of Granulibacter bethesdensis (strain ATCC BAA-1260 / CGDNIH1).